A 291-amino-acid chain; its full sequence is MTTLAIDIGGTKLAAALIGADGQIRDRRELPTPASQTPEALRDALSALVSPLQAHAQRVAIASTGIIRDGSLLALNPHNLGGLLHFPLVKTLEQLTNLPTIAINDAQAAAWAEYQALEGDVTEMVFITVSTGVGGGVVSGGKLLTGPGGLAGHIGHTLADPHGPVCGCGRTGCVEAIASGRGIAAAAQGELAGADARTIFTRAGQGDEQAQWLIHRSARTLARLIADIKATTDCQCVVVGGSVGLAEGYLALVETYLAQEPAAFHVDLLAAHYRHDAGLLGAALLAQGEKL.

ATP is bound by residues 5-12 (AIDIGGTK) and 132-139 (GVGGGVVS). Residues histidine 156, cysteine 166, cysteine 168, and cysteine 173 each contribute to the Zn(2+) site.

The protein belongs to the ROK (NagC/XylR) family. NanK subfamily. As to quaternary structure, homodimer.

The enzyme catalyses an N-acyl-D-mannosamine + ATP = an N-acyl-D-mannosamine 6-phosphate + ADP + H(+). Its pathway is amino-sugar metabolism; N-acetylneuraminate degradation; D-fructose 6-phosphate from N-acetylneuraminate: step 2/5. In terms of biological role, catalyzes the phosphorylation of N-acetylmannosamine (ManNAc) to ManNAc-6-P. The sequence is that of N-acetylmannosamine kinase from Escherichia coli (strain SE11).